We begin with the raw amino-acid sequence, 283 residues long: Nopaline-binding periplasmic protein (283 aa).

A signal peptide spans 1-25 (MKFFNLNALAAVVTGVLLAAGPTQA). An intrachain disulfide couples C63 to C70.

Belongs to the bacterial solute-binding protein 3 family.

The protein resides in the periplasm. Its function is as follows. Component of the nopaline active transport system probably consisting of four subunits: Q, M, P and T. This system is also capable of transporting octopine provided that catabolic functions are induced with nopaline. This is Nopaline-binding periplasmic protein (nocT) from Agrobacterium fabrum (strain C58 / ATCC 33970) (Agrobacterium tumefaciens (strain C58)).